A 139-amino-acid chain; its full sequence is Large ribosomal subunit protein uL16 (139 aa).

This sequence belongs to the universal ribosomal protein uL16 family. As to quaternary structure, part of the 50S ribosomal subunit.

Its function is as follows. Binds 23S rRNA and is also seen to make contacts with the A and possibly P site tRNAs. This Chlorobium luteolum (strain DSM 273 / BCRC 81028 / 2530) (Pelodictyon luteolum) protein is Large ribosomal subunit protein uL16.